Reading from the N-terminus, the 773-residue chain is Linolenate 9R-lipoxygenase (773 aa).

The 598-residue stretch at 176 to 773 (YEWVDSKKKS…LEDLMMSINI (598 aa)) folds into the Lipoxygenase domain. 3 residues coordinate Fe cation: His515, His520, and Ile773.

The protein belongs to the lipoxygenase family.

It catalyses the reaction (9Z,12Z,15Z)-octadecatrienoate + O2 = (9R,10E,12Z,15Z)-9-hydroperoxyoctadeca-10,12,15-trienoate. The protein operates within lipid metabolism; oxylipin biosynthesis. Its function is as follows. Catalyzes the conversion of alpha-linoleate to (9R,10E,12Z,15Z)-9-hydroperoxyoctadeca-10,12,15-trienoate in oxylipin biosynthesis. Also converts alpha-linoleate to (9R,10E,12Z)-9-hydroperoxyoctadeca-10,12-dienoate. The chain is Linolenate 9R-lipoxygenase from Nostoc sp. (strain PCC 7120 / SAG 25.82 / UTEX 2576).